The sequence spans 230 residues: Acyl-coenzyme A thioesterase THEM4 (230 aa).

The N-terminal 27 residues, 1-27, are a transit peptide targeting the mitochondrion; that stretch reads MLRSCAMRLRTLGATPARRPEATRRLF. Serine 28 and serine 29 each carry phosphoserine. Lysine 46 and lysine 57 each carry N6-succinyllysine. Lysine 65 carries the post-translational modification N6-acetyllysine. An N6-succinyllysine mark is found at lysine 89 and lysine 98. The active-site Proton donor/acceptor is aspartate 152. Substrate-binding positions include lysine 175 and 196 to 197; that span reads RK. Position 197 is an N6-succinyllysine (lysine 197).

The protein belongs to the THEM4/THEM5 thioesterase family. In terms of assembly, homodimer and homotetramer. Interacts with AKT1 in the cytosol. Phosphorylated.

Its subcellular location is the cell membrane. It is found in the cell projection. It localises to the ruffle membrane. The protein resides in the cytoplasm. The protein localises to the mitochondrion. Its subcellular location is the mitochondrion inner membrane. It is found in the mitochondrion intermembrane space. It carries out the reaction hexadecanoyl-CoA + H2O = hexadecanoate + CoA + H(+). The enzyme catalyses octanoyl-CoA + H2O = octanoate + CoA + H(+). The catalysed reaction is decanoyl-CoA + H2O = decanoate + CoA + H(+). It catalyses the reaction dodecanoyl-CoA + H2O = dodecanoate + CoA + H(+). It carries out the reaction tetradecanoyl-CoA + H2O = tetradecanoate + CoA + H(+). The enzyme catalyses (9Z)-octadecenoyl-CoA + H2O = (9Z)-octadecenoate + CoA + H(+). The catalysed reaction is (5Z,8Z,11Z,14Z)-eicosatetraenoyl-CoA + H2O = (5Z,8Z,11Z,14Z)-eicosatetraenoate + CoA + H(+). In terms of biological role, has acyl-CoA thioesterase activity towards medium and long-chain (C14 to C18) fatty acyl-CoA substrates, and probably plays a role in mitochondrial fatty acid metabolism. Plays a role in the apoptotic process, possibly via its regulation of AKT1 activity. This chain is Acyl-coenzyme A thioesterase THEM4 (Them4), found in Rattus norvegicus (Rat).